The sequence spans 425 residues: Histidine--tRNA ligase (425 aa).

This sequence belongs to the class-II aminoacyl-tRNA synthetase family. As to quaternary structure, homodimer.

It is found in the cytoplasm. It carries out the reaction tRNA(His) + L-histidine + ATP = L-histidyl-tRNA(His) + AMP + diphosphate + H(+). The sequence is that of Histidine--tRNA ligase from Shewanella sp. (strain W3-18-1).